A 304-amino-acid polypeptide reads, in one-letter code: Aspartate carbamoyltransferase catalytic subunit (304 aa).

Arg49 and Thr50 together coordinate carbamoyl phosphate. Lys77 lines the L-aspartate pocket. Carbamoyl phosphate is bound by residues Arg99, His127, and Gln130. Residues Arg160 and Arg211 each coordinate L-aspartate. Ala252 and Pro253 together coordinate carbamoyl phosphate.

The protein belongs to the aspartate/ornithine carbamoyltransferase superfamily. ATCase family. As to quaternary structure, heterododecamer (2C3:3R2) of six catalytic PyrB chains organized as two trimers (C3), and six regulatory PyrI chains organized as three dimers (R2).

The catalysed reaction is carbamoyl phosphate + L-aspartate = N-carbamoyl-L-aspartate + phosphate + H(+). The protein operates within pyrimidine metabolism; UMP biosynthesis via de novo pathway; (S)-dihydroorotate from bicarbonate: step 2/3. Catalyzes the condensation of carbamoyl phosphate and aspartate to form carbamoyl aspartate and inorganic phosphate, the committed step in the de novo pyrimidine nucleotide biosynthesis pathway. This Bacillus cereus (strain ATCC 10987 / NRS 248) protein is Aspartate carbamoyltransferase catalytic subunit.